Consider the following 367-residue polypeptide: Alanine racemase (367 aa).

Residue lysine 40 is the Proton acceptor; specific for D-alanine of the active site. An N6-(pyridoxal phosphate)lysine modification is found at lysine 40. Arginine 136 is a binding site for substrate. Catalysis depends on tyrosine 263, which acts as the Proton acceptor; specific for L-alanine. Methionine 310 contacts substrate.

It belongs to the alanine racemase family. Pyridoxal 5'-phosphate serves as cofactor.

The enzyme catalyses L-alanine = D-alanine. It functions in the pathway amino-acid biosynthesis; D-alanine biosynthesis; D-alanine from L-alanine: step 1/1. Its function is as follows. Catalyzes the interconversion of L-alanine and D-alanine. May also act on other amino acids. The polypeptide is Alanine racemase (alr) (Streptococcus thermophilus (strain ATCC BAA-491 / LMD-9)).